The sequence spans 645 residues: Crossover junction endonuclease mus-81 (645 aa).

Disordered stretches follow at residues 98–119 and 219–310; these read LAAAGAVQDEQPPPPKRARTAR and GVAG…EDRK. Residues 223-252 are compositionally biased toward polar residues; sequence SANTSRNAIASGSGTSNPNRSENVNPNRQD. Acidic residues predominate over residues 296–305; that stretch reads DSDDEDPKYD. Positions 353–459 constitute an ERCC4 domain; sequence ELVLDTREVQ…NVVYIIENYN (107 aa).

This sequence belongs to the XPF family. As to quaternary structure, interacts with eme-1. Requires Mg(2+) as cofactor.

The protein localises to the nucleus. In terms of biological role, interacts with eme-1 to form a DNA structure-specific endonuclease with substrate preference for branched DNA structures with a 5'-end at the branch nick. Typical substrates include 3'-flap structures, D-loops, replication forks and nicked Holliday junctions. May be required in mitosis for the processing of stalled or collapsed replication fork intermediates. May be required in meiosis for the repair of meiosis-specific double strand breaks subsequent to single-end invasion (SEI). This chain is Crossover junction endonuclease mus-81 (mus-81), found in Neurospora crassa (strain ATCC 24698 / 74-OR23-1A / CBS 708.71 / DSM 1257 / FGSC 987).